The chain runs to 530 residues: Pentatricopeptide repeat-containing protein At5g56310 (530 aa).

PPR repeat units follow at residues 77–114 (NTYL…CAKP), 115–149 (DTFT…GFDS), 150–180 (SVHV…MLVK), 181–211 (DVNV…MPCW), 214–248 (NEVS…NVEP), 249–283 (DEVT…GMNR), 284–314 (AVSL…VNER), 315–349 (NVVT…GVRP), 350–380 (NDVT…MRSK), and 386–420 (NIEH…ANAA). The interval 421–496 (IWGSLLAASN…MAGESSIEVE (76 aa)) is type E motif. A type E(+) motif region spans residues 497-527 (NRVYKFISGDLTHPQVERIHEILQEMDLQIQ).

This sequence belongs to the PPR family. PCMP-E subfamily.

The sequence is that of Pentatricopeptide repeat-containing protein At5g56310 (PCMP-E13) from Arabidopsis thaliana (Mouse-ear cress).